The following is a 142-amino-acid chain: Large ribosomal subunit protein uL11 (142 aa).

Belongs to the universal ribosomal protein uL11 family. Part of the ribosomal stalk of the 50S ribosomal subunit. Interacts with L10 and the large rRNA to form the base of the stalk. L10 forms an elongated spine to which L12 dimers bind in a sequential fashion forming a multimeric L10(L12)X complex. In terms of processing, one or more lysine residues are methylated.

Its function is as follows. Forms part of the ribosomal stalk which helps the ribosome interact with GTP-bound translation factors. The chain is Large ribosomal subunit protein uL11 from Rhodopseudomonas palustris (strain BisB18).